Here is a 386-residue protein sequence, read N- to C-terminus: Terpene cyclase 6 (386 aa).

3 residues coordinate Mg(2+): aspartate 128, asparagine 276, and serine 280. The short motif at 128–132 (DDEID) is the D(D/E)XX(D/E) motif element. Positions 276–284 (NEILSLQKE) match the NSE motif motif. A WxxxxxRY motif motif is present at residues 360–367 (WSYNCERY). Arginine 366 and tyrosine 367 together coordinate (2E,6E)-farnesyl diphosphate.

The protein belongs to the terpene synthase family. As to quaternary structure, homodimer. Mg(2+) is required as a cofactor.

The enzyme catalyses (2E,6E)-farnesyl diphosphate + H2O = trichobrasilenol + diphosphate. The catalysed reaction is (2E,6E)-farnesyl diphosphate = alpha-humulene + diphosphate. It catalyses the reaction (2E,6E)-farnesyl diphosphate = (-)-(E)-beta-caryophyllene + diphosphate. It carries out the reaction (2E,6E)-farnesyl diphosphate = (E)-2-epi-beta-caryophyllene + diphosphate. The enzyme catalyses (2E,6E)-farnesyl diphosphate + H2O = (+)-isoafricanol + diphosphate. The catalysed reaction is (2E,6E)-farnesyl diphosphate + H2O = (+)-(2S,3R,9R)-pristinol + diphosphate. It catalyses the reaction (2E,6E)-farnesyl diphosphate = african-3-ene + diphosphate. It carries out the reaction (2E,6E)-farnesyl diphosphate = african-1-ene + diphosphate. It participates in sesquiterpene biosynthesis. Terpene cyclase that is able to convert FPP into a mixture of sesquiterpene hydrocarbons and alcohols. The main product is trichobrasilenol. Additionally, side products include alpha-humulene, caryophyllene, 2-epi-caryophyllene, african-3-ene, african-1-ene, isoafricanol and pristinol. Does not accept GPP, GGPP, and GFPP as substrates. This chain is Terpene cyclase 6, found in Hypocrea atroviridis (Trichoderma atroviride).